We begin with the raw amino-acid sequence, 902 residues long: Respiratory nitrate reductase alpha chain (902 aa).

Residues H29, C33, and C37 each coordinate [4Fe-4S] cluster.

This sequence belongs to the prokaryotic molybdopterin-containing oxidoreductase family. Heterotrimer composed of an alpha, a beta and a gamma chain. Alpha and beta are catalytic chains; gamma chains are involved in binding the enzyme complex to the cytoplasmic membrane. Requires [4Fe-4S] cluster as cofactor. The cofactor is Mo-bis(molybdopterin guanine dinucleotide).

Its subcellular location is the cell membrane. The protein localises to the cytoplasm. It catalyses the reaction nitrate + a quinol = a quinone + nitrite + H2O. Its activity is regulated as follows. Inhibited by micromolar concentrations of azide. In terms of biological role, the nitrate reductase enzyme complex allows Bradyrhizobium sp. USDA 3045 to use nitrate as an electron acceptor during anaerobic growth. The alpha chain is the actual site of nitrate reduction. In Bradyrhizobium sp, this protein is Respiratory nitrate reductase alpha chain (narG).